The primary structure comprises 1487 residues: MDGASAKQDGLWESKSSSDVSSCPEASLETVGSLARLPDQQDTAQDASVEVNRGFKEEGSPDRSSQVAICQNGQIPDLQLSLDPTTSPVGPDASTGVDGFHDNLRNSQGTSAEGSVRKEALQSLRLSLPMQETQLCSTASSLPLEKEEQVRLQARKRLEEQLMQYRVKRHRERSSQPATKMKLFSTLDPELMLNPENLPRASTVAVTKEYSFLRTSVPRGPKVGSLGLLAHSKEKKNSKSSKIRSLADYRTEDPSDSGGLGSTADAVGSSLKQSRSSTSVVSEVSPSSETDNRVESASMTGDSVSEADGNESDSSSHSSLSARGACGVLGNVGMPGTAYMVDGQEISAEALGQFPSIKDVLQAAAAQHQDQNQEANGEVRSRRDSICSSVSMESSLAEPQDELLQILKDKRRLEGQVEALSLEASQALQEKAELQAQLAALSTRLQAQVEHSHSSQQKQDSLSSEVDTLKQSCWDLGRAMTDLQSMLEAKNASLASSNNDLQVAEEQYQRLMAKVEDMQRNILSKDNTVHDLRQQMTALQSQLQQVQLERTTLTSKLQASQAEITSLQHARQWYQQQLTLAQEARVRLQGEMAHIQVGQMTQAGLLEHLKLENVSLSHQLTETQHRSIKEKERIAVQLQSIEADMLDQEAAFVQIREAKTMVEEDLQRRLEEFEGEREQLQKVADAAASLEQQLEQVKLTLFQRDQQLAALQQEHLDVIKQLTSTQEALQAKGQSLDDLHTRYDELQARLEELQREADSREDAIHFLQNEKIVLEVALQSAKSDKEELDRGARRLEEDTEETSGLLEQLRQDLAVKSNQVEHLQQETATLRKQMQKVKEQFVQQKVMVEAYRRDATSKDQLINELKATKKRLDSEMKELRQELIKLQGEKKTVEVEHSRLQKDMSLVHQQMAELEGHLQSVQKERDEMEIHLQSLKFDKEQMIALTEANETLKKQIEELQQEAKKAITEQKQKMKRLGSDLTSAQKEMKTKHKAYENAVSILSRRLQEALASKEATDAELNQLRAQSTGGSSDPVLHEKIRALEVELQNVGQSKILLEKELQEVITMTSQELEESREKVLELEDELQESRGFRRKIKRLEESNKKLALELEHERGKLTGLGQSNAALREHNSILETALAKREADLVQLNLQVQAVLQRKEEEDRQMKQLVQALQVSLEKEKMEVNSLKEQMAAARIEAGHNRRHFKAATLELSEVKKELQAKEHLVQTLQAEVDELQIQDGKHSQEIAQFQTELAEARTQLQLLQKKLDEQMSQQPTGSQEMEDLKWELDQKEREIQSLKQQLDLTEQQGKKELEGTQQTLQTIKSELEMVQEDLSETQKDKFMLQAKVSELKNNMKTLLQQNQQLKLDLRRGAAKKKEPKGESNSSSPATPIKIPDCPVPASLLEELLRPPPAVSKEPLKNLNNCLQQLKQEMDSLQRQMEEHTITVHESLSSWAQVEAAPAEHAHPRGDTKLHNQNSVPRDGLGQ.

The residue at position 1 (Met1) is an N-acetylmethionine. The segment at 1 to 118 (MDGASAKQDG…GTSAEGSVRK (118 aa)) is disordered. Ser18 and Ser60 each carry phosphoserine. The span at 62–74 (DRSSQVAICQNGQ) shows a compositional bias: polar residues. The interaction with GOPC stretch occupies residues 121-141 (LQSLRLSLPMQETQLCSTASS). The interval 172–257 (ERSSQPATKM…DYRTEDPSDS (86 aa)) is golgi-targeting domain. Disordered stretches follow at residues 221–321 (PKVG…SSLS) and 365–394 (AAQH…SMES). 3 stretches are compositionally biased toward low complexity: residues 269–288 (SSLK…SPSS), 312–321 (SDSSSHSSLS), and 365–375 (AAQHQDQNQEA). Ser270 carries the phosphoserine modification. Positions 358–1454 (KDVLQAAAAQ…TITVHESLSS (1097 aa)) form a coiled coil. Ser381, Ser385, and Ser461 each carry phosphoserine. Positions 785 to 796 (KEELDRGARRLE) are enriched in basic and acidic residues. The disordered stretch occupies residues 785–804 (KEELDRGARRLEEDTEETSG). Ser979 carries the phosphoserine modification. A compositionally biased stretch (basic and acidic residues) spans 1372–1382 (RGAAKKKEPKG). Disordered regions lie at residues 1372-1396 (RGAA…IKIP) and 1458-1487 (VEAA…GLGQ). Phosphoserine is present on Ser1387. Residues 1462–1474 (PAEHAHPRGDTKL) show a composition bias toward basic and acidic residues. Position 1479 is a phosphoserine (Ser1479).

In terms of assembly, homodimer. Interacts with GOLGA7. Interacts with GOPC. Cleaved by caspases in apoptotic cells. As to expression, highly expressed in testis. Transcripts can be found in spermatids during spermatogenesis. No expression in Leydig cells, spermatogonia or spermatocytes. Detected at low levels in all tissues.

Its subcellular location is the cytoplasm. It localises to the golgi apparatus. It is found in the golgi stack membrane. Plays an important role in spermatogenesis and/or testis development. Probably identical with the serologically detectable male antigen (SDM). Probably involved in maintaining Golgi structure. This Mus musculus (Mouse) protein is Golgin subfamily A member 3 (Golga3).